We begin with the raw amino-acid sequence, 566 residues long: MKARLLVLLCALAAADADTICIGYHANNSTDTVDTVLEKNVTVTHSVNLLEDSHNGKLCRLKGIPPLQLGKCNIAGWLLGNPECDSLLPARSWSYIVETPNSENGACYPGDFINYEELREQLSSVSSFERFEIFPKESSWPKHNTTKGVTAACSHAGKSSFYRNLLWLTKKEDSYPKLKNSYVNKKGKEVLVLWGVHHPSSSKEQQTLYQNENAYVSVVSSNYNRRFTPEIAERPKVRDQTGRMNYYWTLLEPGDTIIFEANGNLIAPWYAFALSRGFGSGIITSNASMHECNTKCQTPQGAINSSLPFQNIHPVTIGECPKYVRSAKLRMVTGLRNIPSIQSRGLFGAIAGFIEGGWTGMIDGWYGYHHQNEQGSGYAADQKSTQNAINGITNKVNSVIEKMNTQFTAVGKEFNNLEKRMENLNKKVDDGFLDIWTYNAELLVLLENERTLDFHDSNVKNLYEKVKSQLKNNAKEIGNGCFEFYHKCDNECMESVRNGTYDYPKYSEESKLNREKIDGVKLESMGVYQILAIYSTVASSLVLLVSLGAISFWMCSNGSLQCRICI.

An N-terminal signal peptide occupies residues 1–17; it reads MKARLLVLLCALAAADA. At 18 to 529 the chain is on the extracellular side; that stretch reads DTICIGYHAN…VKLESMGVYQ (512 aa). 6 disulfides stabilise this stretch: cysteine 21–cysteine 481, cysteine 59–cysteine 292, cysteine 72–cysteine 84, cysteine 107–cysteine 153, cysteine 296–cysteine 320, and cysteine 488–cysteine 492. Residues asparagine 27, asparagine 28, and asparagine 40 are each glycosylated (N-linked (GlcNAc...) asparagine; by host). N-linked (GlcNAc...) asparagine; by host glycans are attached at residues asparagine 144, asparagine 286, and asparagine 304. Residue asparagine 498 is glycosylated (N-linked (GlcNAc...) asparagine; by host). A helical transmembrane segment spans residues 530–550; sequence ILAIYSTVASSLVLLVSLGAI. Residues 551–566 lie on the Cytoplasmic side of the membrane; it reads SFWMCSNGSLQCRICI. 3 S-palmitoyl cysteine; by host lipidation sites follow: cysteine 555, cysteine 562, and cysteine 565.

It belongs to the influenza viruses hemagglutinin family. In terms of assembly, homotrimer of disulfide-linked HA1-HA2. Interacts with human CACNA1C. Palmitoylated. In terms of processing, in natural infection, inactive HA is matured into HA1 and HA2 outside the cell by one or more trypsin-like, arginine-specific endoprotease secreted by the bronchial epithelial cells. One identified protease that may be involved in this process is secreted in lungs by club cells.

It is found in the virion membrane. Its subcellular location is the host apical cell membrane. Functionally, binds to sialic acid-containing receptors on the cell surface, bringing about the attachment of the virus particle to the cell. This attachment induces virion internalization either through clathrin-dependent endocytosis or through clathrin- and caveolin-independent pathway. Plays a major role in the determination of host range restriction and virulence. Class I viral fusion protein. Responsible for penetration of the virus into the cell cytoplasm by mediating the fusion of the membrane of the endocytosed virus particle with the endosomal membrane. Low pH in endosomes induces an irreversible conformational change in HA2, releasing the fusion hydrophobic peptide. Several trimers are required to form a competent fusion pore. In Aves (Human), this protein is Hemagglutinin.